A 205-amino-acid chain; its full sequence is Holliday junction branch migration complex subunit RuvA (205 aa).

Positions 1–64 (MIGKLKGVVD…EDMIRLYGFR (64 aa)) are domain I. A domain II region spans residues 65–143 (SDAEREWFRL…AFAPVDPALI (79 aa)). A flexible linker region spans residues 144–152 (RLAGAVEER). A domain III region spans residues 153–205 (TAPQPVADAISALVNLGYPQIQASAAVAAALQGAGEGAEAKTLIRLGLRELAR).

The protein belongs to the RuvA family. In terms of assembly, homotetramer. Forms an RuvA(8)-RuvB(12)-Holliday junction (HJ) complex. HJ DNA is sandwiched between 2 RuvA tetramers; dsDNA enters through RuvA and exits via RuvB. An RuvB hexamer assembles on each DNA strand where it exits the tetramer. Each RuvB hexamer is contacted by two RuvA subunits (via domain III) on 2 adjacent RuvB subunits; this complex drives branch migration. In the full resolvosome a probable DNA-RuvA(4)-RuvB(12)-RuvC(2) complex forms which resolves the HJ.

The protein resides in the cytoplasm. Functionally, the RuvA-RuvB-RuvC complex processes Holliday junction (HJ) DNA during genetic recombination and DNA repair, while the RuvA-RuvB complex plays an important role in the rescue of blocked DNA replication forks via replication fork reversal (RFR). RuvA specifically binds to HJ cruciform DNA, conferring on it an open structure. The RuvB hexamer acts as an ATP-dependent pump, pulling dsDNA into and through the RuvAB complex. HJ branch migration allows RuvC to scan DNA until it finds its consensus sequence, where it cleaves and resolves the cruciform DNA. The polypeptide is Holliday junction branch migration complex subunit RuvA (Methylobacterium nodulans (strain LMG 21967 / CNCM I-2342 / ORS 2060)).